Consider the following 145-residue polypeptide: MLNEFKAFIARGNVMDLAVGVIIGGAFGGIVKSLVDDLIMPIVGAIFGGFDFSNYFLPLSSAVNAPTLAAARAQGAVFAYGSFLTVLINFLILAWIIFLMVKGVNYLRLQVERQEKAAPEELPPPPADVQLLTEIRDLLATRPTA.

3 helical membrane passes run 14-34 (VMDLAVGVIIGGAFGGIVKSL), 38-58 (LIMPIVGAIFGGFDFSNYFLP), and 81-101 (GSFLTVLINFLILAWIIFLMV).

It belongs to the MscL family. Homopentamer.

It localises to the cell inner membrane. Its function is as follows. Channel that opens in response to stretch forces in the membrane lipid bilayer. May participate in the regulation of osmotic pressure changes within the cell. This Rhizobium leguminosarum bv. trifolii (strain WSM2304) protein is Large-conductance mechanosensitive channel.